Consider the following 310-residue polypeptide: uncharacterized protein (310 aa).

Positions 1–70 (MAGNSQRRGA…ARGRTDETET (70 aa)) are disordered. Residues 49 to 62 (AAKRAKAQQRRPAR) are compositionally biased toward basic residues. Residues Gly262, Val282, and Leu291 each contribute to the S-adenosyl-L-methionine site.

This sequence belongs to the class IV-like SAM-binding methyltransferase superfamily. RNA methyltransferase TrmH family.

This is an uncharacterized protein from Mycobacterium ulcerans (strain Agy99).